The primary structure comprises 26 residues: DEAD-box ATP-dependent RNA helicase 1 (26 aa).

Positions 1–10 (RELLMGIFEK) match the Q motif motif. Position 11 to 16 (11 to 16 (NGTGKT)) interacts with ATP. Positions 11–26 (NGTGKTAAFVIPLLQK) constitute a Helicase ATP-binding domain.

This sequence belongs to the DEAD box helicase family. DDX6/DHH1 subfamily.

Its subcellular location is the cytoplasm. The protein localises to the P-body. The enzyme catalyses ATP + H2O = ADP + phosphate + H(+). Functionally, ATP-dependent RNA helicase involved in mRNA turnover, and more specifically in mRNA decapping. In Catharanthus roseus (Madagascar periwinkle), this protein is DEAD-box ATP-dependent RNA helicase 1.